The primary structure comprises 102 residues: Small ribosomal subunit protein uS10 (102 aa).

This sequence belongs to the universal ribosomal protein uS10 family. Part of the 30S ribosomal subunit.

In terms of biological role, involved in the binding of tRNA to the ribosomes. The chain is Small ribosomal subunit protein uS10 from Mesoplasma florum (strain ATCC 33453 / NBRC 100688 / NCTC 11704 / L1) (Acholeplasma florum).